Reading from the N-terminus, the 302-residue chain is Probable protein ABIL4 (302 aa).

2 disordered regions span residues 151 to 179 (PSTG…YPSA) and 220 to 256 (LLGK…QPGF). The span at 161–170 (ARLQTDNGQD) shows a compositional bias: polar residues.

The protein belongs to the ABI family. Binds SCAR.

The protein resides in the cytoplasm. It localises to the cytoskeleton. Its function is as follows. Involved in regulation of actin and microtubule organization. Part of a WAVE complex that activates the Arp2/3 complex. The protein is Probable protein ABIL4 of Oryza sativa subsp. japonica (Rice).